The sequence spans 37 residues: Large ribosomal subunit protein bL36 (37 aa).

Belongs to the bacterial ribosomal protein bL36 family.

In Salinispora tropica (strain ATCC BAA-916 / DSM 44818 / JCM 13857 / NBRC 105044 / CNB-440), this protein is Large ribosomal subunit protein bL36.